We begin with the raw amino-acid sequence, 887 residues long: Valine--tRNA ligase (887 aa).

Residues 48-58 (PNVTGVLHVGH) carry the 'HIGH' region motif. A 'KMSKS' region motif is present at residues 527-531 (KMSKS). Position 530 (lysine 530) interacts with ATP. Residues 814 to 887 (LAGLVDIEAE…EASDRLKKLS (74 aa)) are a coiled coil.

Belongs to the class-I aminoacyl-tRNA synthetase family. ValS type 1 subfamily. In terms of assembly, monomer.

The protein localises to the cytoplasm. It catalyses the reaction tRNA(Val) + L-valine + ATP = L-valyl-tRNA(Val) + AMP + diphosphate. In terms of biological role, catalyzes the attachment of valine to tRNA(Val). As ValRS can inadvertently accommodate and process structurally similar amino acids such as threonine, to avoid such errors, it has a 'posttransfer' editing activity that hydrolyzes mischarged Thr-tRNA(Val) in a tRNA-dependent manner. The polypeptide is Valine--tRNA ligase (Desulfotalea psychrophila (strain LSv54 / DSM 12343)).